The sequence spans 365 residues: Alanine racemase (365 aa).

Catalysis depends on K35, which acts as the Proton acceptor; specific for D-alanine. Residue K35 is modified to N6-(pyridoxal phosphate)lysine. Residue R130 participates in substrate binding. The active-site Proton acceptor; specific for L-alanine is the Y256. M304 serves as a coordination point for substrate.

This sequence belongs to the alanine racemase family. It depends on pyridoxal 5'-phosphate as a cofactor.

It catalyses the reaction L-alanine = D-alanine. The protein operates within amino-acid biosynthesis; D-alanine biosynthesis; D-alanine from L-alanine: step 1/1. Functionally, catalyzes the interconversion of L-alanine and D-alanine. May also act on other amino acids. The protein is Alanine racemase (alr) of Acidovorax sp. (strain JS42).